The primary structure comprises 957 residues: Glycine dehydrogenase (decarboxylating) (957 aa).

Lys708 is modified (N6-(pyridoxal phosphate)lysine).

Belongs to the GcvP family. In terms of assembly, the glycine cleavage system is composed of four proteins: P, T, L and H. The cofactor is pyridoxal 5'-phosphate.

It catalyses the reaction N(6)-[(R)-lipoyl]-L-lysyl-[glycine-cleavage complex H protein] + glycine + H(+) = N(6)-[(R)-S(8)-aminomethyldihydrolipoyl]-L-lysyl-[glycine-cleavage complex H protein] + CO2. Its function is as follows. The glycine cleavage system catalyzes the degradation of glycine. The P protein binds the alpha-amino group of glycine through its pyridoxal phosphate cofactor; CO(2) is released and the remaining methylamine moiety is then transferred to the lipoamide cofactor of the H protein. The polypeptide is Glycine dehydrogenase (decarboxylating) (Escherichia coli O81 (strain ED1a)).